Consider the following 143-residue polypeptide: uncharacterized protein (143 aa).

The 55-residue stretch at 24-78 (IRQRRRWQNMSQAALGEAIGVTFQQVQKYEKGSNRVGAGRLQQISDALEVHPSYF) folds into the HTH cro/C1-type domain. The H-T-H motif DNA-binding region spans 35 to 54 (QAALGEAIGVTFQQVQKYEK).

This is an uncharacterized protein from Sinorhizobium fredii (strain NBRC 101917 / NGR234).